Consider the following 70-residue polypeptide: Aurein-3.1 (70 aa).

A signal peptide spans methionine 1 to cysteine 22. A propeptide spanning residues glutamate 23–arginine 49 is cleaved from the precursor. The disordered stretch occupies residues arginine 27 to lysine 48. A compositionally biased stretch (basic and acidic residues) spans alanine 38–lysine 48. Position 66 is an isoleucine amide (isoleucine 66).

As to expression, expressed by the skin dorsal glands.

It localises to the secreted. The protein resides in the target cell membrane. Amphipathic alpha-helical antimicrobial peptide with weak to potent activity against Gram-positive bacteria, and no activity against Gram-negative bacteria. Probably acts by disturbing membrane functions with its amphipathic structure. Shows anticancer activity. The protein is Aurein-3.1 of Ranoidea aurea (Green and golden bell frog).